The chain runs to 236 residues: Probable chemoreceptor glutamine deamidase CheD (236 aa).

A disordered region spans residues Met1–Asp20.

This sequence belongs to the CheD family.

It carries out the reaction L-glutaminyl-[protein] + H2O = L-glutamyl-[protein] + NH4(+). Its function is as follows. Probably deamidates glutamine residues to glutamate on methyl-accepting chemotaxis receptors (MCPs), playing an important role in chemotaxis. The polypeptide is Probable chemoreceptor glutamine deamidase CheD (Ralstonia pickettii (strain 12J)).